We begin with the raw amino-acid sequence, 48 residues long: Large ribosomal subunit protein eL40 (48 aa).

This sequence belongs to the eukaryotic ribosomal protein eL40 family.

In Methanospirillum hungatei JF-1 (strain ATCC 27890 / DSM 864 / NBRC 100397 / JF-1), this protein is Large ribosomal subunit protein eL40.